The following is a 299-amino-acid chain: pH-regulated antigen PRA1 (299 aa).

A signal peptide spans 1–15 (MNYLLFCLFFAFSVA). 4 N-linked (GlcNAc...) asparagine glycosylation sites follow: Asn-48, Asn-89, Asn-135, and Asn-208. The segment at 253 to 299 (FEDSDSGSDSGASSTASSSHQHTDSNPSATTDANSHCHTHADGEVHC) is disordered. Residues 259–272 (GSDSGASSTASSSH) are compositionally biased toward low complexity. A compositionally biased stretch (polar residues) spans 278–288 (NPSATTDANSH).

Belongs to the ZPS1 family. Component of a multiprotein complex of 250 kDa composed of at least HYR1, MP65, and PRA1. Interacts with host Integrin alpha-M/beta-2 heterodimer. Also binds human factor H (CFH), CFHR1, plasminogen (PLG), complement C3, and C4BPA. Interacts with ZRT101. In terms of processing, N- and O-glycosylated. The N- and 0-glycosidically linked carbohydrates represent 18 to 20 percent and 3 to 4 percent, respectively, of the molecular mass of PRA1. 0-linked sugar residues may be involved in the interaction with fibrinogen. Contributes highly to the carbohydrate component of the matrix. Treatment with tunicamycin impairs glycosylation.

The protein localises to the secreted. In terms of biological role, cell surface protein involved in the host-parasite interaction during candidal infection. With MP65, represents a major component of the biofilm matrix. As a surface protein, binds the two human complement regulators CFH and CFHR1, as well as plasminogen PLG, mediates complement evasion and extra-cellular matrix interaction and/or degradation. As a released protein, enhances complement control in direct vicinity of the yeast and thus generates an additional protective layer which controls host complement attack, assisting the fungus in escaping host surveillance. Binds to host fluid-phase C3 and blocks cleavage of C3 to C3a and C3b, leading to inhibition of complement activation and protection from uptake of C.albicans by human macrophages. Also mediates human complement control and complement evasion through binding to C4BPA, another human complement inhibitor, as well as through binding to host integrin alpha-M/beta-2. Binds zinc from its environment and then reassociates with ZRT1 to acquire this essential metal. The sequence is that of pH-regulated antigen PRA1 from Candida albicans (strain SC5314 / ATCC MYA-2876) (Yeast).